Consider the following 166-residue polypeptide: Eukaryotic translation initiation factor 5A (166 aa).

K52 is modified (hypusine). A disordered region spans residues D99–P125.

This sequence belongs to the eIF-5A family. Lys-52 undergoes hypusination, a unique post-translational modification that consists in the addition of a butylamino group from spermidine to lysine side chain, leading to the formation of the unusual amino acid hypusine. eIF-5As are the only known proteins to undergo this modification, which is essential for their function. Hypusination is mediated by the consecutive action of deoxyhypusine synthase DHSc and deoxyhypusine hydroxylase DOHH.

The protein resides in the cytoplasm. Translation factor that promotes translation elongation and termination, particularly upon ribosome stalling at specific amino acid sequence contexts. Binds between the exit (E) and peptidyl (P) site of the ribosome and promotes rescue of stalled ribosome: specifically required for efficient translation of polyproline-containing peptides as well as other motifs that stall the ribosome. Acts as a ribosome quality control (RQC) cofactor by joining the RQC complex to facilitate peptidyl transfer during CAT tailing step. Required for cell growth during both bloodstream (BF) and insect procyclic (PF) life cycle stages and for survival of the bloodstream form. In Trypanosoma brucei brucei (strain 927/4 GUTat10.1), this protein is Eukaryotic translation initiation factor 5A.